Here is a 413-residue protein sequence, read N- to C-terminus: RNA-binding protein 41 (413 aa).

Positions 223 to 235 (SVGDSGTAESPSL) are enriched in polar residues. The segment at 223–247 (SVGDSGTAESPSLLQDKGKQAAQGK) is disordered. Serine 232 carries the post-translational modification Phosphoserine. The RRM domain occupies 309–387 (KVLYLKNLSP…KILVIEFGKN (79 aa)).

Its function is as follows. May bind RNA. In Homo sapiens (Human), this protein is RNA-binding protein 41 (RBM41).